Reading from the N-terminus, the 951-residue chain is Valine--tRNA ligase (951 aa).

Residues 40–50 (PNVTGSLHMGH) carry the 'HIGH' region motif. Residues 551-555 (KMSKS) carry the 'KMSKS' region motif. Lys554 provides a ligand contact to ATP. Positions 879 to 950 (MAGLIDVEAE…LLEQKAKIES (72 aa)) form a coiled coil.

The protein belongs to the class-I aminoacyl-tRNA synthetase family. ValS type 1 subfamily. In terms of assembly, monomer.

The protein resides in the cytoplasm. The enzyme catalyses tRNA(Val) + L-valine + ATP = L-valyl-tRNA(Val) + AMP + diphosphate. In terms of biological role, catalyzes the attachment of valine to tRNA(Val). As ValRS can inadvertently accommodate and process structurally similar amino acids such as threonine, to avoid such errors, it has a 'posttransfer' editing activity that hydrolyzes mischarged Thr-tRNA(Val) in a tRNA-dependent manner. This Pseudoalteromonas translucida (strain TAC 125) protein is Valine--tRNA ligase.